The chain runs to 428 residues: 3-phosphoshikimate 1-carboxyvinyltransferase (428 aa).

3-phosphoshikimate contacts are provided by Lys-22, Ser-23, and Arg-27. Lys-22 lines the phosphoenolpyruvate pocket. Residues Gly-94 and Arg-122 each coordinate phosphoenolpyruvate. 3-phosphoshikimate is bound by residues Ser-168, Ser-169, Gln-170, Ser-196, Asp-315, and Lys-342. Gln-170 is a phosphoenolpyruvate binding site. Catalysis depends on Asp-315, which acts as the Proton acceptor. Phosphoenolpyruvate-binding residues include Arg-346, Arg-389, and Lys-414.

Belongs to the EPSP synthase family. Monomer.

It localises to the cytoplasm. The catalysed reaction is 3-phosphoshikimate + phosphoenolpyruvate = 5-O-(1-carboxyvinyl)-3-phosphoshikimate + phosphate. Its pathway is metabolic intermediate biosynthesis; chorismate biosynthesis; chorismate from D-erythrose 4-phosphate and phosphoenolpyruvate: step 6/7. In terms of biological role, catalyzes the transfer of the enolpyruvyl moiety of phosphoenolpyruvate (PEP) to the 5-hydroxyl of shikimate-3-phosphate (S3P) to produce enolpyruvyl shikimate-3-phosphate and inorganic phosphate. The protein is 3-phosphoshikimate 1-carboxyvinyltransferase of Thiobacillus denitrificans (strain ATCC 25259 / T1).